Reading from the N-terminus, the 430-residue chain is Probable carboxypeptidase AO090003000058 (430 aa).

Positions 1–16 (MKSIYSLVLCTALTAA) are cleaved as a signal peptide. Asn-84 carries N-linked (GlcNAc...) asparagine glycosylation. Asp-156 provides a ligand contact to Zn(2+). Residue Glu-188 is the Proton acceptor of the active site. Residue Glu-189 participates in Zn(2+) binding. Asn-285 is a glycosylation site (N-linked (GlcNAc...) asparagine).

This sequence belongs to the peptidase M20A family. It depends on Zn(2+) as a cofactor.

The protein resides in the secreted. The protein is Probable carboxypeptidase AO090003000058 of Aspergillus oryzae (strain ATCC 42149 / RIB 40) (Yellow koji mold).